Reading from the N-terminus, the 430-residue chain is UDP-N-acetylglucosamine 1-carboxyvinyltransferase (430 aa).

A phosphoenolpyruvate-binding site is contributed by 22–23 (KN). Arg102 serves as a coordination point for UDP-N-acetyl-alpha-D-glucosamine. Cys126 serves as the catalytic Proton donor. At Cys126 the chain carries 2-(S-cysteinyl)pyruvic acid O-phosphothioketal. UDP-N-acetyl-alpha-D-glucosamine is bound by residues 131-135 (RPVDL), 172-175 (KVSV), Asp317, and Ile339.

Belongs to the EPSP synthase family. MurA subfamily.

The protein localises to the cytoplasm. The catalysed reaction is phosphoenolpyruvate + UDP-N-acetyl-alpha-D-glucosamine = UDP-N-acetyl-3-O-(1-carboxyvinyl)-alpha-D-glucosamine + phosphate. The protein operates within cell wall biogenesis; peptidoglycan biosynthesis. In terms of biological role, cell wall formation. Adds enolpyruvyl to UDP-N-acetylglucosamine. This is UDP-N-acetylglucosamine 1-carboxyvinyltransferase from Sinorhizobium medicae (strain WSM419) (Ensifer medicae).